The chain runs to 831 residues: Periplasmic nitrate reductase (831 aa).

The segment at residues M1–A29 is a signal peptide (tat-type signal). The 4Fe-4S Mo/W bis-MGD-type domain maps to L41–D97. [4Fe-4S] cluster contacts are provided by C48, C51, C55, and C83. Mo-bis(molybdopterin guanine dinucleotide) is bound by residues K85, Q152, N177, C181, W214–M221, S245–H249, Q264–D266, M375, Q379, N485, S511–D512, K534, D561, and T721–S730. W797 provides a ligand contact to substrate. Residues N805 and K822 each coordinate Mo-bis(molybdopterin guanine dinucleotide).

It belongs to the prokaryotic molybdopterin-containing oxidoreductase family. NasA/NapA/NarB subfamily. In terms of assembly, component of the periplasmic nitrate reductase NapAB complex composed of NapA and NapB. It depends on [4Fe-4S] cluster as a cofactor. The cofactor is Mo-bis(molybdopterin guanine dinucleotide). In terms of processing, predicted to be exported by the Tat system. The position of the signal peptide cleavage has not been experimentally proven.

It is found in the periplasm. The catalysed reaction is 2 Fe(II)-[cytochrome] + nitrate + 2 H(+) = 2 Fe(III)-[cytochrome] + nitrite + H2O. Catalytic subunit of the periplasmic nitrate reductase complex NapAB. Receives electrons from NapB and catalyzes the reduction of nitrate to nitrite. The protein is Periplasmic nitrate reductase of Saccharophagus degradans (strain 2-40 / ATCC 43961 / DSM 17024).